The chain runs to 169 residues: Peptide deformylase (169 aa).

Fe cation-binding residues include cysteine 91 and histidine 133. Glutamate 134 is a catalytic residue. Histidine 137 is a Fe cation binding site.

The protein belongs to the polypeptide deformylase family. Fe(2+) is required as a cofactor.

It catalyses the reaction N-terminal N-formyl-L-methionyl-[peptide] + H2O = N-terminal L-methionyl-[peptide] + formate. Functionally, removes the formyl group from the N-terminal Met of newly synthesized proteins. Requires at least a dipeptide for an efficient rate of reaction. N-terminal L-methionine is a prerequisite for activity but the enzyme has broad specificity at other positions. This chain is Peptide deformylase, found in Salmonella agona (strain SL483).